The sequence spans 131 residues: Sec-independent protein translocase protein TatB (131 aa).

The chain crosses the membrane as a helical span at residues 2–22 (FDGIGFMELLLIGVLGLVVLG). The tract at residues 69-131 (NQGLKNLAPE…ENAKSDKPNG (63 aa)) is disordered. Residues 105-123 (AKETPAKETATTETTSTEN) show a composition bias toward low complexity.

Belongs to the TatB family. In terms of assembly, the Tat system comprises two distinct complexes: a TatABC complex, containing multiple copies of TatA, TatB and TatC subunits, and a separate TatA complex, containing only TatA subunits. Substrates initially bind to the TatABC complex, which probably triggers association of the separate TatA complex to form the active translocon.

It is found in the cell inner membrane. In terms of biological role, part of the twin-arginine translocation (Tat) system that transports large folded proteins containing a characteristic twin-arginine motif in their signal peptide across membranes. Together with TatC, TatB is part of a receptor directly interacting with Tat signal peptides. TatB may form an oligomeric binding site that transiently accommodates folded Tat precursor proteins before their translocation. This chain is Sec-independent protein translocase protein TatB, found in Shewanella piezotolerans (strain WP3 / JCM 13877).